The primary structure comprises 309 residues: Aspartate carbamoyltransferase catalytic subunit (309 aa).

Positions 55 and 56 each coordinate carbamoyl phosphate. An L-aspartate-binding site is contributed by Lys85. The carbamoyl phosphate site is built by Arg106, His135, and Gln138. Residues Arg168 and Arg230 each coordinate L-aspartate. 2 residues coordinate carbamoyl phosphate: Leu268 and Pro269.

Belongs to the aspartate/ornithine carbamoyltransferase superfamily. ATCase family. In terms of assembly, heterododecamer (2C3:3R2) of six catalytic PyrB chains organized as two trimers (C3), and six regulatory PyrI chains organized as three dimers (R2).

The catalysed reaction is carbamoyl phosphate + L-aspartate = N-carbamoyl-L-aspartate + phosphate + H(+). It participates in pyrimidine metabolism; UMP biosynthesis via de novo pathway; (S)-dihydroorotate from bicarbonate: step 2/3. Catalyzes the condensation of carbamoyl phosphate and aspartate to form carbamoyl aspartate and inorganic phosphate, the committed step in the de novo pyrimidine nucleotide biosynthesis pathway. This chain is Aspartate carbamoyltransferase catalytic subunit, found in Aliivibrio salmonicida (strain LFI1238) (Vibrio salmonicida (strain LFI1238)).